The primary structure comprises 102 residues: Large ribosomal subunit protein eL30 (102 aa).

This sequence belongs to the eukaryotic ribosomal protein eL30 family. Part of the 50S ribosomal subunit.

This is Large ribosomal subunit protein eL30 from Thermococcus kodakarensis (strain ATCC BAA-918 / JCM 12380 / KOD1) (Pyrococcus kodakaraensis (strain KOD1)).